Consider the following 228-residue polypeptide: 2,3-bisphosphoglycerate-dependent phosphoglycerate mutase (228 aa).

Substrate contacts are provided by residues 8 to 15 (RHGQSVWN), 21 to 22 (TG), Arg60, 87 to 90 (ERHY), Lys98, 114 to 115 (RR), and 183 to 184 (GN). His9 functions as the Tele-phosphohistidine intermediate in the catalytic mechanism. The Proton donor/acceptor role is filled by Glu87.

The protein belongs to the phosphoglycerate mutase family. BPG-dependent PGAM subfamily.

It catalyses the reaction (2R)-2-phosphoglycerate = (2R)-3-phosphoglycerate. Its pathway is carbohydrate degradation; glycolysis; pyruvate from D-glyceraldehyde 3-phosphate: step 3/5. Functionally, catalyzes the interconversion of 2-phosphoglycerate and 3-phosphoglycerate. The sequence is that of 2,3-bisphosphoglycerate-dependent phosphoglycerate mutase from Staphylococcus carnosus (strain TM300).